The chain runs to 274 residues: Large ribosomal subunit protein uL2cz (274 aa).

2 disordered regions span residues 1–25 (MAIH…VKSN) and 224–274 (NPVD…RRSK). The span at 7–25 (KTSTPSTRNGTVDSQVKSN) shows a compositional bias: polar residues.

Belongs to the universal ribosomal protein uL2 family. Part of the 50S ribosomal subunit.

The protein localises to the plastid. It is found in the chloroplast. This is Large ribosomal subunit protein uL2cz (rpl2-A) from Coffea arabica (Arabian coffee).